The primary structure comprises 37 residues: Large ribosomal subunit protein bL36A (37 aa).

The protein belongs to the bacterial ribosomal protein bL36 family.

In Kocuria rhizophila (strain ATCC 9341 / DSM 348 / NBRC 103217 / DC2201), this protein is Large ribosomal subunit protein bL36A.